A 348-amino-acid chain; its full sequence is Heat-inducible transcription repressor HrcA (348 aa).

It belongs to the HrcA family.

Negative regulator of class I heat shock genes (grpE-dnaK-dnaJ and groELS operons). Prevents heat-shock induction of these operons. The protein is Heat-inducible transcription repressor HrcA of Thermodesulfovibrio yellowstonii (strain ATCC 51303 / DSM 11347 / YP87).